The chain runs to 166 residues: MSEAIIAKKAEQVELIAEKMKAAVSIVVVDSRGLTVDQDTVLRRSLRESGVEFKVIKNSILTRAAEKAGLDELKDIFVGPSAVAFSNEDVIAPAKVINDFAKTAEALEIKGGAIEGVVSSKEEIQALAALPNREGMLSMLLSVLQAPVRNVAYAVKAVAESKEGAA.

It belongs to the universal ribosomal protein uL10 family. In terms of assembly, part of the ribosomal stalk of the 50S ribosomal subunit. The N-terminus interacts with L11 and the large rRNA to form the base of the stalk. The C-terminus forms an elongated spine to which L12 dimers bind in a sequential fashion forming a multimeric L10(L12)X complex.

Its function is as follows. Forms part of the ribosomal stalk, playing a central role in the interaction of the ribosome with GTP-bound translation factors. The chain is Large ribosomal subunit protein uL10 from Streptococcus equi subsp. zooepidemicus (strain MGCS10565).